A 506-amino-acid polypeptide reads, in one-letter code: 2-isopropylmalate synthase (506 aa).

In terms of domain architecture, Pyruvate carboxyltransferase spans 4–266 (ILFMDTTLRD…EPSMTLKEIK (263 aa)). The Mn(2+) site is built by D13, H201, H203, and N237. Positions 390–506 (NITQLQVHFV…KLKSFIQLVK (117 aa)) are regulatory domain.

Belongs to the alpha-IPM synthase/homocitrate synthase family. LeuA type 1 subfamily. Homodimer. Requires Mn(2+) as cofactor.

The protein resides in the cytoplasm. The enzyme catalyses 3-methyl-2-oxobutanoate + acetyl-CoA + H2O = (2S)-2-isopropylmalate + CoA + H(+). Its pathway is amino-acid biosynthesis; L-leucine biosynthesis; L-leucine from 3-methyl-2-oxobutanoate: step 1/4. Functionally, catalyzes the condensation of the acetyl group of acetyl-CoA with 3-methyl-2-oxobutanoate (2-ketoisovalerate) to form 3-carboxy-3-hydroxy-4-methylpentanoate (2-isopropylmalate). The sequence is that of 2-isopropylmalate synthase from Bacillus anthracis (strain A0248).